Reading from the N-terminus, the 72-residue chain is Translation initiation factor IF-1 (72 aa).

In terms of domain architecture, S1-like spans 1–72 (MAKEDSIEME…SKGRIVYRAR (72 aa)).

This sequence belongs to the IF-1 family. In terms of assembly, component of the 30S ribosomal translation pre-initiation complex which assembles on the 30S ribosome in the order IF-2 and IF-3, IF-1 and N-formylmethionyl-tRNA(fMet); mRNA recruitment can occur at any time during PIC assembly.

It is found in the cytoplasm. Its function is as follows. One of the essential components for the initiation of protein synthesis. Stabilizes the binding of IF-2 and IF-3 on the 30S subunit to which N-formylmethionyl-tRNA(fMet) subsequently binds. Helps modulate mRNA selection, yielding the 30S pre-initiation complex (PIC). Upon addition of the 50S ribosomal subunit IF-1, IF-2 and IF-3 are released leaving the mature 70S translation initiation complex. The polypeptide is Translation initiation factor IF-1 (Nitrosococcus oceani (strain ATCC 19707 / BCRC 17464 / JCM 30415 / NCIMB 11848 / C-107)).